The primary structure comprises 74 residues: Large ribosomal subunit protein bL31 (74 aa).

The Zn(2+) site is built by Cys-16, Cys-18, Cys-38, and Cys-41.

This sequence belongs to the bacterial ribosomal protein bL31 family. Type A subfamily. In terms of assembly, part of the 50S ribosomal subunit. The cofactor is Zn(2+).

In terms of biological role, binds the 23S rRNA. This Salinispora tropica (strain ATCC BAA-916 / DSM 44818 / JCM 13857 / NBRC 105044 / CNB-440) protein is Large ribosomal subunit protein bL31.